Here is a 1481-residue protein sequence, read N- to C-terminus: Protein shortage in chiasmata 1 ortholog (1481 aa).

Disordered regions lie at residues 479–498 (TDVHQLHPQKRPIPSSEKEV) and 512–560 (KSKV…IQAS). Residues 513-531 (SKVEANPKNDQEPEARIMQ) are compositionally biased toward basic and acidic residues. Residues 543 to 560 (SSQVPSAESASSSQIQAS) are compositionally biased toward low complexity.

This sequence belongs to the XPF family. Highly divergent. As to quaternary structure, interacts with TEX11. Interacts with SPO16. As to expression, mainly expressed in adult testis.

The protein resides in the chromosome. In terms of biological role, ATPase required during meiosis for the formation of crossover recombination intermediates. Binds DNA: preferentially binds to single-stranded DNA and DNA branched structures. Does not show nuclease activity in vitro, but shows ATPase activity, which is stimulated by the presence of single-stranded DNA. Plays a key role in homologous recombination and crossing-over in meiotic prophase I in male and female germ cells. Required for proper synaptonemal complex assembly and homologous chromosome pairing. Required for recruitment of TEX11 and MSH4 to recombination intermediates. This chain is Protein shortage in chiasmata 1 ortholog, found in Mus musculus (Mouse).